The chain runs to 205 residues: Small ribosomal subunit protein uS4 (205 aa).

Residues 18-46 (NIWGRPKSPVNRREYGPGQHGQRRKGKLS) form a disordered region. The 61-residue stretch at 94–154 (RRLDTVVFRA…EASKQLAVVL (61 aa)) folds into the S4 RNA-binding domain.

Belongs to the universal ribosomal protein uS4 family. Part of the 30S ribosomal subunit. Contacts protein S5. The interaction surface between S4 and S5 is involved in control of translational fidelity.

In terms of biological role, one of the primary rRNA binding proteins, it binds directly to 16S rRNA where it nucleates assembly of the body of the 30S subunit. With S5 and S12 plays an important role in translational accuracy. The protein is Small ribosomal subunit protein uS4 of Bradyrhizobium sp. (strain ORS 278).